The sequence spans 309 residues: Protein FdhE homolog (309 aa).

Residues 1–22 (MSIRIVPQEQLEQNGKSTPEGH) are disordered.

This sequence belongs to the FdhE family.

It is found in the cytoplasm. Its function is as follows. Necessary for formate dehydrogenase activity. The polypeptide is Protein FdhE homolog (Pectobacterium carotovorum subsp. carotovorum (strain PC1)).